Reading from the N-terminus, the 683-residue chain is Leucine zipper putative tumor suppressor 2 homolog (683 aa).

3 disordered regions span residues M1–S37, Y82–N107, and M262–S320. Composition is skewed to polar residues over residues I11–S37 and K96–N107. Residues S290–G308 are compositionally biased toward low complexity. Residues S324–E665 are a coiled coil.

This sequence belongs to the LZTS2 family.

The protein localises to the cytoplasm. It localises to the cytoskeleton. It is found in the microtubule organizing center. The protein resides in the centrosome. Its function is as follows. Negative regulator of katanin-mediated microtubule severing and release from the centrosome. Required for central spindle formation and the completion of cytokinesis. Negative regulator of the Wnt signaling pathway. Represses beta-catenin-mediated transcriptional activation by promoting the nuclear exclusion of beta-catenin. The chain is Leucine zipper putative tumor suppressor 2 homolog (lzts2) from Xenopus tropicalis (Western clawed frog).